Reading from the N-terminus, the 506-residue chain is Maturase K (506 aa).

Belongs to the intron maturase 2 family. MatK subfamily.

Its subcellular location is the plastid. The protein resides in the chloroplast. Functionally, usually encoded in the trnK tRNA gene intron. Probably assists in splicing its own and other chloroplast group II introns. The sequence is that of Maturase K from Medicago sativa (Alfalfa).